Here is a 374-residue protein sequence, read N- to C-terminus: Guanine nucleotide-binding protein subunit alpha-15 (374 aa).

The region spanning 41-374 (EELKLLLLGP…ARYLDEINLL (334 aa)) is the G-alpha domain. The segment at 44–57 (KLLLLGPGESGKST) is G1 motif. Residues 49–56 (GPGESGKS), 183–189 (LRSRMPT), 208–212 (DVGGQ), 277–280 (NKTD), and alanine 346 contribute to the GTP site. Residues serine 56 and threonine 189 each contribute to the Mg(2+) site. A G2 motif region spans residues 181-189 (DVLRSRMPT). The tract at residues 204–213 (LRIVDVGGQR) is G3 motif. The tract at residues 273 to 280 (ILFLNKTD) is G4 motif. A G5 motif region spans residues 344–349 (TCATDT).

It belongs to the G-alpha family. G(q) subfamily. In terms of assembly, g proteins are composed of 3 units; alpha, beta and gamma. The alpha chain contains the guanine nucleotide binding site. As to expression, expressed primarily in hematopoietic cells. Coexpressed with EDG6 at the same relative levels in all tissues examined, with the highest levels in adult spleen and lung.

Its function is as follows. Guanine nucleotide-binding proteins (G proteins) are involved as modulators or transducers in various transmembrane signaling systems. The protein is Guanine nucleotide-binding protein subunit alpha-15 (Gna15) of Mus musculus (Mouse).